Consider the following 99-residue polypeptide: Large ribosomal subunit protein uL23 (99 aa).

Belongs to the universal ribosomal protein uL23 family. Part of the 50S ribosomal subunit. Contacts protein L29, and trigger factor when it is bound to the ribosome.

Its function is as follows. One of the early assembly proteins it binds 23S rRNA. One of the proteins that surrounds the polypeptide exit tunnel on the outside of the ribosome. Forms the main docking site for trigger factor binding to the ribosome. The polypeptide is Large ribosomal subunit protein uL23 (Magnetococcus marinus (strain ATCC BAA-1437 / JCM 17883 / MC-1)).